We begin with the raw amino-acid sequence, 302 residues long: Succinate--CoA ligase [ADP-forming] subunit alpha (302 aa).

Residues 17–20 (TGST), lysine 43, and 96–98 (ITE) each bind CoA. Tyrosine 159 lines the substrate pocket. The active-site Tele-phosphohistidine intermediate is the histidine 247.

Belongs to the succinate/malate CoA ligase alpha subunit family. In terms of assembly, heterotetramer of two alpha and two beta subunits.

The catalysed reaction is succinate + ATP + CoA = succinyl-CoA + ADP + phosphate. It catalyses the reaction GTP + succinate + CoA = succinyl-CoA + GDP + phosphate. The protein operates within carbohydrate metabolism; tricarboxylic acid cycle; succinate from succinyl-CoA (ligase route): step 1/1. Succinyl-CoA synthetase functions in the citric acid cycle (TCA), coupling the hydrolysis of succinyl-CoA to the synthesis of either ATP or GTP and thus represents the only step of substrate-level phosphorylation in the TCA. The alpha subunit of the enzyme binds the substrates coenzyme A and phosphate, while succinate binding and nucleotide specificity is provided by the beta subunit. In Staphylococcus epidermidis (strain ATCC 12228 / FDA PCI 1200), this protein is Succinate--CoA ligase [ADP-forming] subunit alpha.